Consider the following 334-residue polypeptide: MLYSLARPMLFSLAPERAHELTLSMLKTAHKMGMLRQTIQPKPVTCMGIEFPNPVGLAAGLDKNGAYIDALAGLGFGFIEIGTITPRPQSGNPKPRLFRIPEAKAIINRMGFNNEGVDQLVENVKAAKFRGILGINIGKNADTPVENAVDDYLICLEKVYNYASYITVNISSPNTKNLRSLQSGDALTELLETLKKRQLELAEQYHHYVPLVLKVAPDLTHEDIQFISEQLLTFKIDGLIVTNTTLSREGVENLPFGNEAGGLSGAPVFEKSTECLRSFAKVLNDQIPLIGVGGITQGEHAVAKKDAGASLVQIYSGLIYTGPDLIKECVSAIT.

Residues 59 to 63 and Thr83 each bind FMN; that span reads AGLDK. Lys63 provides a ligand contact to substrate. 108–112 is a binding site for substrate; that stretch reads NRMGF. Residues Asn136 and Asn169 each contribute to the FMN site. Substrate is bound at residue Asn169. Ser172 acts as the Nucleophile in catalysis. Asn174 contacts substrate. Residues Lys214 and Thr242 each coordinate FMN. 243 to 244 contacts substrate; sequence NT. FMN contacts are provided by residues Gly265, Gly294, and 315 to 316; that span reads YS.

The protein belongs to the dihydroorotate dehydrogenase family. Type 2 subfamily. As to quaternary structure, monomer. The cofactor is FMN.

It localises to the cell membrane. The enzyme catalyses (S)-dihydroorotate + a quinone = orotate + a quinol. It functions in the pathway pyrimidine metabolism; UMP biosynthesis via de novo pathway; orotate from (S)-dihydroorotate (quinone route): step 1/1. Its function is as follows. Catalyzes the conversion of dihydroorotate to orotate with quinone as electron acceptor. The protein is Dihydroorotate dehydrogenase (quinone) of Acinetobacter baylyi (strain ATCC 33305 / BD413 / ADP1).